The chain runs to 354 residues: MTTVIQRRSTSNVWEQFCEWVTSTDNRLYIGWFGVLMIPTLLTATTCFIIAFIGAPPVDIDGIREPVSGSLLYGNNIISGAVVPSSAAIGLHFYPIWEAASLDEWLYNGGPYQLIVLHFLIGVFCYMGREWELSYRLGMRPWIAVAYSAPVAAATAVFLIYPIGQGSFSDGMPLGISGTFNFMLVFQAEHNILMHPFHQLGVAGVFGGALFSAMHGSLVTSSLIRETSEEESQNLGYKFGQEEETYNIVAAHGYFGRLIFQYASFNNSRSLHFFLAAWPVIGIWFTALGISIMAFNLNGFNFNQSIVDSNGRVVGTWADVLNRANLGMEVMHERNAHNFPLDLAAVEVAPAVRG.

3 helical membrane passes run 29 to 46 (YIGW…TATT), 118 to 133 (HFLI…EWEL), and 142 to 156 (WIAV…AATA). Histidine 118 provides a ligand contact to chlorophyll a. Tyrosine 126 contacts pheophytin a. [CaMn4O5] cluster is bound by residues aspartate 170 and glutamate 189. Residues 197–218 (FHQLGVAGVFGGALFSAMHGSL) traverse the membrane as a helical segment. Chlorophyll a is bound at residue histidine 198. Residues histidine 215 and 264-265 (SF) each bind a quinone. Fe cation is bound at residue histidine 215. Histidine 272 serves as a coordination point for Fe cation. Residues 274–288 (FLAAWPVIGIWFTAL) traverse the membrane as a helical segment. [CaMn4O5] cluster is bound by residues histidine 332, glutamate 333, aspartate 342, and alanine 344. The propeptide occupies 345-354 (AVEVAPAVRG).

Belongs to the reaction center PufL/M/PsbA/D family. As to quaternary structure, PSII is composed of 1 copy each of membrane proteins PsbA, PsbB, PsbC, PsbD, PsbE, PsbF, PsbH, PsbI, PsbJ, PsbK, PsbL, PsbM, PsbT, PsbX, PsbY, PsbZ, Psb30/Ycf12, peripheral proteins PsbO, CyanoQ (PsbQ), PsbU, PsbV and a large number of cofactors. It forms dimeric complexes. The cofactor is The D1/D2 heterodimer binds P680, chlorophylls that are the primary electron donor of PSII, and subsequent electron acceptors. It shares a non-heme iron and each subunit binds pheophytin, quinone, additional chlorophylls, carotenoids and lipids. D1 provides most of the ligands for the Mn4-Ca-O5 cluster of the oxygen-evolving complex (OEC). There is also a Cl(-1) ion associated with D1 and D2, which is required for oxygen evolution. The PSII complex binds additional chlorophylls, carotenoids and specific lipids.. In terms of processing, tyr-161 forms a radical intermediate that is referred to as redox-active TyrZ, YZ or Y-Z. Post-translationally, C-terminally processed by CtpA; processing is essential to allow assembly of the oxygen-evolving complex and thus photosynthetic growth.

The protein resides in the cellular thylakoid membrane. The catalysed reaction is 2 a plastoquinone + 4 hnu + 2 H2O = 2 a plastoquinol + O2. Its function is as follows. Photosystem II (PSII) is a light-driven water:plastoquinone oxidoreductase that uses light energy to abstract electrons from H(2)O, generating O(2) and a proton gradient subsequently used for ATP formation. It consists of a core antenna complex that captures photons, and an electron transfer chain that converts photonic excitation into a charge separation. The D1/D2 (PsbA/PsbD) reaction center heterodimer binds P680, the primary electron donor of PSII as well as several subsequent electron acceptors. The polypeptide is Photosystem II protein D1 2 (Synechococcus sp. (strain JA-2-3B'a(2-13)) (Cyanobacteria bacterium Yellowstone B-Prime)).